Here is a 239-residue protein sequence, read N- to C-terminus: Peptidase E (239 aa).

Catalysis depends on charge relay system residues serine 122, aspartate 137, and histidine 159.

The protein belongs to the peptidase S51 family.

The protein resides in the cytoplasm. It carries out the reaction Dipeptidase E catalyzes the hydrolysis of dipeptides Asp-|-Xaa. It does not act on peptides with N-terminal Glu, Asn or Gln, nor does it cleave isoaspartyl peptides.. In terms of biological role, hydrolyzes dipeptides containing N-terminal aspartate residues. May play a role in allowing the cell to use peptide aspartate to spare carbon otherwise required for the synthesis of the aspartate family of amino acids. The polypeptide is Peptidase E (Shewanella baltica (strain OS195)).